Reading from the N-terminus, the 282-residue chain is MSSHPTPSWPRRQRSEGRVALGAGLVAGGTTRLTDLAETGPLRLRLPRVEGAALEGVLLNSAGGLACGDRFAVAAEIGEGADMVLTTTAAEKIYRSDGPVTEIAAELRLGPRARLAWLPQETILYDGARLSRRLTAEIAPDAALTLFEALVFGRSARGETVREGEIRDAWRLARGGRLVYADTLRLDGAVAAHLARPAIAGGARAVATLVHAAPDAESRLDGLRGLIAAAGCAALGVEAGASAWNGLLVLRLLAPESAPLRRAATRILEGFRGLPLPRVWQT.

It belongs to the UreD family. UreD, UreF and UreG form a complex that acts as a GTP-hydrolysis-dependent molecular chaperone, activating the urease apoprotein by helping to assemble the nickel containing metallocenter of UreC. The UreE protein probably delivers the nickel.

Its subcellular location is the cytoplasm. Its function is as follows. Required for maturation of urease via the functional incorporation of the urease nickel metallocenter. The chain is Urease accessory protein UreD from Methylobacterium sp. (strain 4-46).